An 827-amino-acid polypeptide reads, in one-letter code: Valine--tRNA ligase (827 aa).

The 'HIGH' region motif lies at Pro-41–His-51. The 'KMSKS' region motif lies at Lys-511–Ser-515. An ATP-binding site is contributed by Lys-514. A coiled-coil region spans residues Glu-765–Glu-827.

Belongs to the class-I aminoacyl-tRNA synthetase family. ValS type 1 subfamily. As to quaternary structure, monomer.

The protein localises to the cytoplasm. It carries out the reaction tRNA(Val) + L-valine + ATP = L-valyl-tRNA(Val) + AMP + diphosphate. Catalyzes the attachment of valine to tRNA(Val). As ValRS can inadvertently accommodate and process structurally similar amino acids such as threonine, to avoid such errors, it has a 'posttransfer' editing activity that hydrolyzes mischarged Thr-tRNA(Val) in a tRNA-dependent manner. This Mycoplasmopsis pulmonis (strain UAB CTIP) (Mycoplasma pulmonis) protein is Valine--tRNA ligase.